The following is a 117-amino-acid chain: uncharacterized protein (117 aa).

An N-terminal signal peptide occupies residues 1–38 (MIIDSSRIPSFTQLHSTMTRAPLLLLCVALVLLGHVNG).

It localises to the secreted. This is an uncharacterized protein from Homo sapiens (Human).